The primary structure comprises 111 residues: Natriuretic peptide TNP-b (111 aa).

The first 27 residues, 1 to 27, serve as a signal peptide directing secretion; the sequence is MVGLSRLAGGGLLLLLLLALLPLALDG. Residues 28 to 71 constitute a propeptide that is removed on maturation; that stretch reads KPAPLPQALPEALAGGTTALRRDVTEEQQQQLVAEESSGPAAGR. Disordered regions lie at residues 51–77 and 92–111; these read VTEE…PKIG and SGLG…PGGS. A disulfide bond links Cys-80 and Cys-96. Residues 107-111 constitute a propeptide that is removed on maturation; sequence IPGGS.

It belongs to the natriuretic peptide family. Expressed by the venom gland.

It is found in the secreted. Functionally, snake venom natriuretic peptide that exhibits vasoactive and probable hypotensive activity. Is only weakly active on natriuretic peptide receptor-C (NPR3). This chain is Natriuretic peptide TNP-b, found in Oxyuranus scutellatus scutellatus (Australian taipan).